Consider the following 395-residue polypeptide: Probable hercynylcysteine sulfoxide lyase (395 aa).

The interval 1–21 (MQDEAMRRSGANSPAGDSLAD) is disordered. Position 220 is an N6-(pyridoxal phosphate)lysine (K220).

This sequence belongs to the class-V pyridoxal-phosphate-dependent aminotransferase family. EgtE subfamily. Pyridoxal 5'-phosphate is required as a cofactor.

The catalysed reaction is S-(hercyn-2-yl)-L-cysteine S-oxide + AH2 + H(+) = ergothioneine + pyruvate + A + NH4(+). The protein operates within amino-acid biosynthesis; ergothioneine biosynthesis. Its function is as follows. Probably catalyzes the conversion of hercynylcysteine sulfoxide to ergothioneine. ERG is one of the major redox buffers which protects bacteria against redox stressors and antibiotics; loss of ERG or mycothiol (MSH, the other major redox buffer in this bacteria) leads to respiratory alterations and bioenergetic deficiencies that negatively impact virulence. The chain is Probable hercynylcysteine sulfoxide lyase from Mycobacterium tuberculosis (strain CDC 1551 / Oshkosh).